Reading from the N-terminus, the 261-residue chain is Cytochrome c oxidase subunit 3 (261 aa).

Residues 1-15 (MTHQTHAYHMVNPSP) lie on the Mitochondrial matrix side of the membrane. Residues 16-34 (WPLTGALSALLMTSGLVMW) traverse the membrane as a helical segment. Over 35–40 (FHYNST) the chain is Mitochondrial intermembrane. A helical transmembrane segment spans residues 41-66 (LLLTLGLTTNLLTMYQWWRDIIREST). Residues 67 to 72 (FQGHHT) lie on the Mitochondrial matrix side of the membrane. Residues 73-105 (PAVQKGLRYGMILFIISEVFFFSGFFWAFYHSS) form a helical membrane-spanning segment. Over 106-128 (LAPTPELGGCWPPTGIHPLNPME) the chain is Mitochondrial intermembrane. Residues 129-152 (VPLLNTSVLLASGVSITWAHHSLM) form a helical membrane-spanning segment. At 153–155 (EGN) the chain is on the mitochondrial matrix side. A helical transmembrane segment spans residues 156-183 (RKHMLQALFITISLGIYFTLLQASEYYE). Residues 184–190 (APFTISD) are Mitochondrial intermembrane-facing. Residues 191-223 (GVYGSTFFVATGFHGLHVIIGSTFLIVCFLRQL) traverse the membrane as a helical segment. Residues 224–232 (KFHFTSNHH) are Mitochondrial matrix-facing. The chain crosses the membrane as a helical span at residues 233 to 256 (FGFEAAAWYWHFVDVVWLFLYVSI). At 257 to 261 (YWWGS) the chain is on the mitochondrial intermembrane side.

This sequence belongs to the cytochrome c oxidase subunit 3 family. Component of the cytochrome c oxidase (complex IV, CIV), a multisubunit enzyme composed of 14 subunits. The complex is composed of a catalytic core of 3 subunits MT-CO1, MT-CO2 and MT-CO3, encoded in the mitochondrial DNA, and 11 supernumerary subunits COX4I, COX5A, COX5B, COX6A, COX6B, COX6C, COX7A, COX7B, COX7C, COX8 and NDUFA4, which are encoded in the nuclear genome. The complex exists as a monomer or a dimer and forms supercomplexes (SCs) in the inner mitochondrial membrane with NADH-ubiquinone oxidoreductase (complex I, CI) and ubiquinol-cytochrome c oxidoreductase (cytochrome b-c1 complex, complex III, CIII), resulting in different assemblies (supercomplex SCI(1)III(2)IV(1) and megacomplex MCI(2)III(2)IV(2)).

The protein localises to the mitochondrion inner membrane. The enzyme catalyses 4 Fe(II)-[cytochrome c] + O2 + 8 H(+)(in) = 4 Fe(III)-[cytochrome c] + 2 H2O + 4 H(+)(out). Component of the cytochrome c oxidase, the last enzyme in the mitochondrial electron transport chain which drives oxidative phosphorylation. The respiratory chain contains 3 multisubunit complexes succinate dehydrogenase (complex II, CII), ubiquinol-cytochrome c oxidoreductase (cytochrome b-c1 complex, complex III, CIII) and cytochrome c oxidase (complex IV, CIV), that cooperate to transfer electrons derived from NADH and succinate to molecular oxygen, creating an electrochemical gradient over the inner membrane that drives transmembrane transport and the ATP synthase. Cytochrome c oxidase is the component of the respiratory chain that catalyzes the reduction of oxygen to water. Electrons originating from reduced cytochrome c in the intermembrane space (IMS) are transferred via the dinuclear copper A center (CU(A)) of subunit 2 and heme A of subunit 1 to the active site in subunit 1, a binuclear center (BNC) formed by heme A3 and copper B (CU(B)). The BNC reduces molecular oxygen to 2 water molecules using 4 electrons from cytochrome c in the IMS and 4 protons from the mitochondrial matrix. The chain is Cytochrome c oxidase subunit 3 (MT-CO3) from Rhinoceros unicornis (Greater Indian rhinoceros).